The following is a 304-amino-acid chain: Acetaldehyde dehydrogenase 1 (304 aa).

Ser-11 to Ile-14 is a binding site for NAD(+). Cys-130 functions as the Acyl-thioester intermediate in the catalytic mechanism. NAD(+)-binding positions include Ser-161–Asn-169 and Asn-272.

Belongs to the acetaldehyde dehydrogenase family.

The catalysed reaction is acetaldehyde + NAD(+) + CoA = acetyl-CoA + NADH + H(+). The chain is Acetaldehyde dehydrogenase 1 (lapF) from Azoarcus sp. (strain BH72).